The sequence spans 701 residues: Vacuolar protein sorting-associated protein 52 B (701 aa).

Coiled-coil stretches lie at residues 23–45 (FEED…EECE) and 511–533 (QLDI…LAKL).

This sequence belongs to the VPS52 family. Component of the Golgi-associated retrograde protein (GARP) complex. As to expression, detected in pollen.

It localises to the golgi apparatus. Its subcellular location is the trans-Golgi network membrane. It is found in the endosome membrane. The protein resides in the golgi apparatus membrane. May be involved in retrograde transport of early and late endosomes to the late Golgi. The sequence is that of Vacuolar protein sorting-associated protein 52 B (P2) from Arabidopsis thaliana (Mouse-ear cress).